Reading from the N-terminus, the 731-residue chain is Elongation factor 2 (731 aa).

A tr-type G domain is found at 19-260 (KHIRNIGIVA…MVVHHLPNPL (242 aa)). GTP contacts are provided by residues 28–35 (AHIDHGKT), 94–98 (DTPGH), and 148–151 (NKVD). H597 carries the post-translational modification Diphthamide.

This sequence belongs to the TRAFAC class translation factor GTPase superfamily. Classic translation factor GTPase family. EF-G/EF-2 subfamily.

The protein localises to the cytoplasm. Catalyzes the GTP-dependent ribosomal translocation step during translation elongation. During this step, the ribosome changes from the pre-translocational (PRE) to the post-translocational (POST) state as the newly formed A-site-bound peptidyl-tRNA and P-site-bound deacylated tRNA move to the P and E sites, respectively. Catalyzes the coordinated movement of the two tRNA molecules, the mRNA and conformational changes in the ribosome. In Methanoregula boonei (strain DSM 21154 / JCM 14090 / 6A8), this protein is Elongation factor 2.